The sequence spans 497 residues: Aluminum-activated malate transporter 10 (497 aa).

Transmembrane regions (helical) follow at residues 66-86, 88-108, 123-143, 148-168, 173-193, and 210-230; these read KVVH…FYYM, PLYD…VVVF, VVAT…ATQS, VFVI…SRFV, ARFD…SVGG, and IAIG…IWAG. Disordered regions lie at residues 413–437 and 476–497; these read PIET…ERTT and DFEQ…PLSS. Over residues 417-436 the composition is skewed to basic and acidic residues; sequence NKPEEVPSEEENKVDSEERT. The segment covering 487-497 has biased composition (polar residues); it reads DNNTKQPPLSS.

The protein belongs to the aromatic acid exporter (TC 2.A.85) family.

The protein localises to the membrane. Malate transporter. This is Aluminum-activated malate transporter 10 (ALMT10) from Arabidopsis thaliana (Mouse-ear cress).